The chain runs to 2197 residues: Non-reducing polyketide synthase Preu6 (2197 aa).

The N-terminal acylcarrier protein transacylase domain (SAT) stretch occupies residues Phe14–Lys253. The 423-residue stretch at Asp375–Glu797 folds into the Ketosynthase family 3 (KS3) domain. Active-site for beta-ketoacyl synthase activity residues include Cys546, His681, and His720. The segment at Leu901–Ser1198 is malonyl-CoA:ACP transacylase (MAT) domain. The active-site For acyl/malonyl transferase activity is the Ser988. The segment at Ala1258 to Pro1282 is disordered. Residues Glu1260–Ser1281 are compositionally biased toward polar residues. Residues Thr1276–Val1403 are N-terminal hotdog fold. Residues Thr1276–Ala1576 enclose the PKS/mFAS DH domain. The interval Lys1284 to Leu1575 is product template (PT) domain. His1310 acts as the Proton acceptor; for dehydratase activity in catalysis. Positions Ala1424 to Ala1576 are C-terminal hotdog fold. Catalysis depends on Asp1487, which acts as the Proton donor; for dehydratase activity. A compositionally biased stretch (polar residues) spans Ser1581–Arg1591. Positions Ser1581–Leu1614 are disordered. Carrier domains are found at residues Asn1639–Met1719 and Asn1748–Pro1824. Residues Ser1673 and Ser1782 each carry the O-(pantetheine 4'-phosphoryl)serine modification. Residues Leu1817–Thr1841 are disordered. Over residues Gly1818–Gly1833 the composition is skewed to low complexity. A thioesterase (TE) domain region spans residues Asp1870–Ala2197. Active-site for thioesterase activity residues include Ser1990 and Asp2137.

It depends on pantetheine 4'-phosphate as a cofactor.

The enzyme catalyses 6 malonyl-CoA + 2 acetyl-CoA + 5 H(+) = o-orsellinate depside + 6 CO2 + 8 CoA + H2O. In terms of biological role, non-reducing polyketide synthase; part of a gene cluster that mediates the biosynthesis of a yet unidentified natural product. The first step in the pathway is performed by Preu6 that condenses 2 acetyl-CoA starter units with 6 malonyl-CoA units to produce lecanoric acid (LA), also known as orsellinate depside, an intermediate that has significant antifungal activity against the plant pathogen Botryosphaeria berengeriana. The biosynthesis probably occurs via the formation of 2 orsellinate intermediates fused together by the C-terminal thioesterase (TE) domain that finally releases lecanoric acid. The polypeptide is Non-reducing polyketide synthase Preu6 (Preussia isomera (Coprophilous fungus)).